Reading from the N-terminus, the 75-residue chain is DNA-directed RNA polymerase subunit omega (75 aa).

It belongs to the RNA polymerase subunit omega family. In terms of assembly, in cyanobacteria the RNAP catalytic core is composed of 2 alpha, 1 beta, 1 beta', 1 gamma and 1 omega subunit. When a sigma factor is associated with the core the holoenzyme is formed, which can initiate transcription.

It carries out the reaction RNA(n) + a ribonucleoside 5'-triphosphate = RNA(n+1) + diphosphate. Its function is as follows. Promotes RNA polymerase assembly. Latches the N- and C-terminal regions of the beta' subunit thereby facilitating its interaction with the beta and alpha subunits. This chain is DNA-directed RNA polymerase subunit omega, found in Synechococcus sp. (strain WH7803).